We begin with the raw amino-acid sequence, 350 residues long: Paired box protein Pax-4 (350 aa).

Positions 5 to 131 form a DNA-binding region, paired; that stretch reads GISSMNQLGG…SSINRVLRAL (127 aa). The segment at 8-64 is PAI subdomain; the sequence is SMNQLGGLFVNGRPLPLDTRQQIVRLAVSGMRPCDISRILKVSNGCVSKILGRYYRT. The segment at 83-131 is RED subdomain; the sequence is PVVARIAQLKGECPALFAWEIQRQLCAEGLCTQDKTPSVSSINRVLRAL. The segment at 153-172 is disordered; sequence LTPHSGSETPRGTHPGTGHR. The segment at residues 170-229 is a DNA-binding region (homeobox); it reads GHRNRTIFSPSQAEALEKEFQRGQYPDSVARGKLATATSLPEDTVRVWFSNRRAKWRRQE. The tract at residues 278-350 is transcription repression; sequence CYQLCWATAP…ATPTHFSHWP (73 aa).

This sequence belongs to the paired homeobox family.

It is found in the nucleus. In terms of biological role, plays an important role in the differentiation and development of pancreatic islet beta cells. Transcriptional repressor that binds to a common element in the glucagon, insulin and somatostatin promoters. Competes with PAX6 for this same promoter binding site. Isoform 2 appears to be a dominant negative form antagonizing PAX4 transcriptional activity. This is Paired box protein Pax-4 (PAX4) from Homo sapiens (Human).